The sequence spans 224 residues: uncharacterized protein (224 aa).

The presence of the two linear plasmids, termed pGKL1 and pGKL2, in strains of Kluyveromyces lactis confers the killer phenotype to the host cell, by promoting the secretion of a toxin able to inhibit the growth of sensitive strains. This is an uncharacterized protein from Kluyveromyces lactis (strain ATCC 8585 / CBS 2359 / DSM 70799 / NBRC 1267 / NRRL Y-1140 / WM37) (Yeast).